Consider the following 127-residue polypeptide: Venom protein family 16 protein 1 (127 aa).

Residues M1 to S18 form the signal peptide.

Expressed by the venom gland (anterior main gland) (at protein level).

It localises to the secreted. This Platymeris rhadamanthus (Red spot assassin bug) protein is Venom protein family 16 protein 1.